The following is a 372-amino-acid chain: N-methyl-L-tryptophan oxidase (372 aa).

Aspartate 4 to histidine 34 provides a ligand contact to FAD. The residue at position 308 (cysteine 308) is an S-8alpha-FAD cysteine.

The protein belongs to the MSOX/MTOX family. MTOX subfamily. In terms of assembly, monomer. Requires FAD as cofactor.

It catalyses the reaction N(alpha)-methyl-L-tryptophan + O2 + H2O = L-tryptophan + formaldehyde + H2O2. Its function is as follows. Catalyzes the oxidative demethylation of N-methyl-L-tryptophan. This Escherichia coli O17:K52:H18 (strain UMN026 / ExPEC) protein is N-methyl-L-tryptophan oxidase.